A 339-amino-acid chain; its full sequence is Anthranilate phosphoribosyltransferase (339 aa).

Residues glycine 81, 84 to 85 (GD), threonine 89, 91 to 94 (NVST), 109 to 117 (KHGNRSVSS), and serine 121 contribute to the 5-phospho-alpha-D-ribose 1-diphosphate site. Residue glycine 81 participates in anthranilate binding. Position 93 (serine 93) interacts with Mg(2+). Asparagine 112 lines the anthranilate pocket. Anthranilate is bound at residue arginine 167. Mg(2+)-binding residues include aspartate 226 and glutamate 227.

It belongs to the anthranilate phosphoribosyltransferase family. As to quaternary structure, homodimer. It depends on Mg(2+) as a cofactor.

It carries out the reaction N-(5-phospho-beta-D-ribosyl)anthranilate + diphosphate = 5-phospho-alpha-D-ribose 1-diphosphate + anthranilate. It functions in the pathway amino-acid biosynthesis; L-tryptophan biosynthesis; L-tryptophan from chorismate: step 2/5. Catalyzes the transfer of the phosphoribosyl group of 5-phosphorylribose-1-pyrophosphate (PRPP) to anthranilate to yield N-(5'-phosphoribosyl)-anthranilate (PRA). In Persephonella marina (strain DSM 14350 / EX-H1), this protein is Anthranilate phosphoribosyltransferase.